The sequence spans 366 residues: Ferredoxin--NADP reductase (366 aa).

Residues aspartate 51, glutamine 59, tyrosine 64, valine 104, phenylalanine 139, aspartate 308, and threonine 349 each coordinate FAD.

This sequence belongs to the ferredoxin--NADP reductase type 2 family. Homodimer. Requires FAD as cofactor.

The enzyme catalyses 2 reduced [2Fe-2S]-[ferredoxin] + NADP(+) + H(+) = 2 oxidized [2Fe-2S]-[ferredoxin] + NADPH. In Methylibium petroleiphilum (strain ATCC BAA-1232 / LMG 22953 / PM1), this protein is Ferredoxin--NADP reductase.